The primary structure comprises 221 residues: 3-phospho-D-glycerate guanylyltransferase (221 aa).

The protein belongs to the CofC family.

The catalysed reaction is (2R)-3-phosphoglycerate + GTP + H(+) = 3-[(R)-glyceryl]-diphospho-5'-guanosine + diphosphate. It carries out the reaction (2S)-2-phospholactate + GTP + H(+) = (2S)-lactyl-2-diphospho-5'-guanosine + diphosphate. The protein operates within cofactor biosynthesis; coenzyme F420 biosynthesis. Its function is as follows. Guanylyltransferase that catalyzes the activation of (2R)-3-phosphoglycerate (3PG) as 3-[(R)-glyceryl]-diphospho-5'-guanosine, via the condensation of 3PG with GTP. It is involved in the biosynthesis of a derivative of the hydride carrier cofactor coenzyme F420, 3PG-F420. Can also use (2S)-2-phospholactate (2-PL), with lower turnover, and has weak activity with phosphoenolpyruvate (PEP). The chain is 3-phospho-D-glycerate guanylyltransferase from Mycetohabitans rhizoxinica (strain DSM 19002 / CIP 109453 / HKI 454) (Paraburkholderia rhizoxinica).